The chain runs to 741 residues: Catalase-peroxidase (741 aa).

The N-terminal stretch at Met1 to Ala23 is a signal peptide. The segment at residues Trp102–Tyr223 is a cross-link (tryptophyl-tyrosyl-methioninium (Trp-Tyr) (with M-249)). Residue His103 is the Proton acceptor of the active site. Positions Tyr223–Met249 form a cross-link, tryptophyl-tyrosyl-methioninium (Tyr-Met) (with W-102). His264 contacts heme b.

The protein belongs to the peroxidase family. Peroxidase/catalase subfamily. As to quaternary structure, homodimer or homotetramer. Heme b serves as cofactor. Post-translationally, formation of the three residue Trp-Tyr-Met cross-link is important for the catalase, but not the peroxidase activity of the enzyme.

It catalyses the reaction H2O2 + AH2 = A + 2 H2O. The catalysed reaction is 2 H2O2 = O2 + 2 H2O. In terms of biological role, bifunctional enzyme with both catalase and broad-spectrum peroxidase activity. In Francisella tularensis subsp. tularensis (strain FSC 198), this protein is Catalase-peroxidase.